Reading from the N-terminus, the 444-residue chain is Guanosine nucleotide diphosphate dissociation inhibitor 2 (444 aa).

Belongs to the Rab GDI family. In terms of tissue distribution, expressed in roots and floral buds.

Regulates the GDP/GTP exchange reaction of most RAB proteins by inhibiting the dissociation of GDP from them, and the subsequent binding of GTP. In Arabidopsis thaliana (Mouse-ear cress), this protein is Guanosine nucleotide diphosphate dissociation inhibitor 2 (GDI2).